Consider the following 239-residue polypeptide: Large ribosomal subunit protein uL2 (239 aa).

Positions 203 to 239 are disordered; the sequence is PFGGKEHHPGKPTTTSRRAPPGRKVGHIAARRTGRRK. A compositionally biased stretch (basic residues) spans 222 to 239; that stretch reads PPGRKVGHIAARRTGRRK.

The protein belongs to the universal ribosomal protein uL2 family. Part of the 50S ribosomal subunit. Forms a bridge to the 30S subunit in the 70S ribosome.

Its function is as follows. One of the primary rRNA binding proteins. Required for association of the 30S and 50S subunits to form the 70S ribosome, for tRNA binding and peptide bond formation. It has been suggested to have peptidyltransferase activity; this is somewhat controversial. Makes several contacts with the 16S rRNA in the 70S ribosome. This chain is Large ribosomal subunit protein uL2, found in Pyrococcus abyssi (strain GE5 / Orsay).